A 147-amino-acid chain; its full sequence is MKVLLLENVQGLGKKGEIVEVKDGYGQNFLIAKGKAQRATNEVINKYKAQQRKAEELAALEKAEMQQMKKTIESLTLTLHKKVGANDTLFGSITKEEIALALEEHKVSLDKKHIEIAQAIKHTGNFEVQVKLGQGINATLKLEIKAQ.

It belongs to the bacterial ribosomal protein bL9 family.

Its function is as follows. Binds to the 23S rRNA. The chain is Large ribosomal subunit protein bL9 from Helicobacter hepaticus (strain ATCC 51449 / 3B1).